Consider the following 190-residue polypeptide: CD70 antigen (190 aa).

Topologically, residues 1-17 (MEEEGSGCNVPRLPWAS) are cytoplasmic. The helical transmembrane segment at 18 to 38 (ILRAALLLLLIGMVIYCFLCG) threads the bilayer. Residues 39–190 (QRFTQQQLDS…TFFGVQLVRP (152 aa)) are Extracellular-facing. The region spanning 52–188 (DLAELLLNHT…DETFFGVQLV (137 aa)) is the THD domain. Residues Asn59 and Asn110 are each glycosylated (N-linked (GlcNAc...) asparagine). Disulfide bonds link Cys111-Cys148 and Cys130-Cys165. An N-linked (GlcNAc...) asparagine glycan is attached at Asn167.

It belongs to the tumor necrosis factor family. Homotrimer. In terms of processing, N-glycosylated.

The protein localises to the cell membrane. In terms of biological role, expressed at the plasma membrane of B cells, it is the ligand of the CD27 receptor which is specifically expressed at the surface of T cells. The CD70-CD27 signaling pathway mediates antigen-specific T cell activation and expansion which in turn provides immune surveillance of B cells. In Sus scrofa (Pig), this protein is CD70 antigen.